Reading from the N-terminus, the 139-residue chain is Large ribosomal subunit protein uL22 (139 aa).

A disordered region spans residues 1 to 22 (MVSENEKTRRPKRSIQHRQNKD). The span at 9–18 (RRPKRSIQHR) shows a compositional bias: basic residues.

It belongs to the universal ribosomal protein uL22 family. As to quaternary structure, part of the 50S ribosomal subunit.

In terms of biological role, this protein binds specifically to 23S rRNA; its binding is stimulated by other ribosomal proteins, e.g. L4, L17, and L20. It is important during the early stages of 50S assembly. It makes multiple contacts with different domains of the 23S rRNA in the assembled 50S subunit and ribosome. Its function is as follows. The globular domain of the protein is located near the polypeptide exit tunnel on the outside of the subunit, while an extended beta-hairpin is found that lines the wall of the exit tunnel in the center of the 70S ribosome. This chain is Large ribosomal subunit protein uL22, found in Pseudothermotoga lettingae (strain ATCC BAA-301 / DSM 14385 / NBRC 107922 / TMO) (Thermotoga lettingae).